The sequence spans 325 residues: Elongation factor P--(R)-beta-lysine ligase (325 aa).

76–78 (SPE) provides a ligand contact to substrate. ATP-binding positions include 100–102 (RNE) and N109. Y118 contacts substrate. 244 to 245 (EL) contacts ATP. E251 lines the substrate pocket. Position 300 (G300) interacts with ATP.

The protein belongs to the class-II aminoacyl-tRNA synthetase family. EpmA subfamily. Homodimer.

The catalysed reaction is D-beta-lysine + L-lysyl-[protein] + ATP = N(6)-((3R)-3,6-diaminohexanoyl)-L-lysyl-[protein] + AMP + diphosphate + H(+). Its function is as follows. With EpmB is involved in the beta-lysylation step of the post-translational modification of translation elongation factor P (EF-P) on 'Lys-34'. Catalyzes the ATP-dependent activation of (R)-beta-lysine produced by EpmB, forming a lysyl-adenylate, from which the beta-lysyl moiety is then transferred to the epsilon-amino group of EF-P 'Lys-34'. This is Elongation factor P--(R)-beta-lysine ligase from Salmonella gallinarum (strain 287/91 / NCTC 13346).